A 310-amino-acid polypeptide reads, in one-letter code: Tyrosine recombinase XerC (310 aa).

In terms of domain architecture, Core-binding (CB) spans 11-97 (NSLQKPLERF…SLRSFFDFLI (87 aa)). Positions 118-298 (PLPKNLDVDE…DFQHLAQAYD (181 aa)) constitute a Tyr recombinase domain. Catalysis depends on residues Arg157, Lys181, His250, Arg253, and His276. The O-(3'-phospho-DNA)-tyrosine intermediate role is filled by Tyr285.

This sequence belongs to the 'phage' integrase family. XerC subfamily. In terms of assembly, forms a cyclic heterotetrameric complex composed of two molecules of XerC and two molecules of XerD.

The protein localises to the cytoplasm. Its function is as follows. Site-specific tyrosine recombinase, which acts by catalyzing the cutting and rejoining of the recombining DNA molecules. The XerC-XerD complex is essential to convert dimers of the bacterial chromosome into monomers to permit their segregation at cell division. It also contributes to the segregational stability of plasmids. This chain is Tyrosine recombinase XerC, found in Vibrio parahaemolyticus serotype O3:K6 (strain RIMD 2210633).